The following is a 964-amino-acid chain: Integrator complex subunit 4 (964 aa).

Lysine 27 is modified (N6-acetyllysine). HEAT repeat units lie at residues alanine 67–phenylalanine 106, glutamine 146–serine 184, glycine 191–lysine 229, leucine 230–tyrosine 264, isoleucine 278–serine 314, asparagine 370–serine 406, proline 407–leucine 445, and glutamate 447–leucine 485. Lysine 792 is covalently cross-linked (Glycyl lysine isopeptide (Lys-Gly) (interchain with G-Cter in SUMO1); alternate). Residue lysine 792 forms a Glycyl lysine isopeptide (Lys-Gly) (interchain with G-Cter in SUMO2); alternate linkage.

Belongs to the Integrator subunit 4 family. In terms of assembly, component of the Integrator complex, composed of core subunits INTS1, INTS2, INTS3, INTS4, INTS5, INTS6, INTS7, INTS8, INTS9/RC74, INTS10, INTS11/CPSF3L, INTS12, INTS13, INTS14 and INTS15. The core complex associates with protein phosphatase 2A subunits PPP2CA and PPP2R1A, to form the Integrator-PP2A (INTAC) complex. INTS4 is part of the RNA endonuclease subcomplex, composed of INTS4, INTS9, INTS11 and inositol hexakisphosphate (InsP6). Interacts with BRAT1; interaction is required for the assembly of the RNA endonuclease subcomplex.

The protein resides in the nucleus. The protein localises to the cytoplasm. Component of the integrator complex, a multiprotein complex that terminates RNA polymerase II (Pol II) transcription in the promoter-proximal region of genes. The integrator complex provides a quality checkpoint during transcription elongation by driving premature transcription termination of transcripts that are unfavorably configured for transcriptional elongation: the complex terminates transcription by (1) catalyzing dephosphorylation of the C-terminal domain (CTD) of Pol II subunit POLR2A/RPB1 and SUPT5H/SPT5, (2) degrading the exiting nascent RNA transcript via endonuclease activity and (3) promoting the release of Pol II from bound DNA. The integrator complex is also involved in terminating the synthesis of non-coding Pol II transcripts, such as enhancer RNAs (eRNAs), small nuclear RNAs (snRNAs), telomerase RNAs and long non-coding RNAs (lncRNAs). Within the integrator complex, INTS4 acts as an scaffold that links INTS9 and INTS11. Mediates recruitment of cytoplasmic dynein to the nuclear envelope, probably as component of the integrator complex. The protein is Integrator complex subunit 4 (Ints4) of Mus musculus (Mouse).